The primary structure comprises 425 residues: Glucose-1-phosphate adenylyltransferase (425 aa).

Residues Y110, G175, 190-191 (EK), and S208 each bind alpha-D-glucose 1-phosphate.

This sequence belongs to the bacterial/plant glucose-1-phosphate adenylyltransferase family. As to quaternary structure, homotetramer.

It carries out the reaction alpha-D-glucose 1-phosphate + ATP + H(+) = ADP-alpha-D-glucose + diphosphate. Its pathway is glycan biosynthesis; glycogen biosynthesis. Its function is as follows. Involved in the biosynthesis of ADP-glucose, a building block required for the elongation reactions to produce glycogen. Catalyzes the reaction between ATP and alpha-D-glucose 1-phosphate (G1P) to produce pyrophosphate and ADP-Glc. This Nitrosospira multiformis (strain ATCC 25196 / NCIMB 11849 / C 71) protein is Glucose-1-phosphate adenylyltransferase.